We begin with the raw amino-acid sequence, 562 residues long: Bifunctional coenzyme A synthase (562 aa).

2 positions are modified to phosphoserine: serine 177 and serine 182. The interval 179–357 (VARSAKQPVR…HKRPELPPGC (179 aa)) is phosphopantetheine adenylyltransferase. One can recognise a DPCK domain in the interval 359–562 (VIGLTGISGS…KRISEAPSDP (204 aa)). 364-371 (GISGSGKS) serves as a coordination point for ATP.

The protein in the central section; belongs to the eukaryotic CoaD family. As to quaternary structure, monomer. The N-terminus is blocked.

It is found in the cytoplasm. The protein localises to the mitochondrion matrix. The enzyme catalyses (R)-4'-phosphopantetheine + ATP + H(+) = 3'-dephospho-CoA + diphosphate. It catalyses the reaction 3'-dephospho-CoA + ATP = ADP + CoA + H(+). The protein operates within cofactor biosynthesis; coenzyme A biosynthesis; CoA from (R)-pantothenate: step 4/5. It functions in the pathway cofactor biosynthesis; coenzyme A biosynthesis; CoA from (R)-pantothenate: step 5/5. Functionally, bifunctional enzyme that catalyzes the fourth and fifth sequential steps of CoA biosynthetic pathway. The fourth reaction is catalyzed by the phosphopantetheine adenylyltransferase, coded by the coaD domain; the fifth reaction is catalyzed by the dephospho-CoA kinase, coded by the coaE domain. May act as a point of CoA biosynthesis regulation. This Sus scrofa (Pig) protein is Bifunctional coenzyme A synthase.